The chain runs to 309 residues: Tagatose-6-phosphate kinase (309 aa).

The protein belongs to the carbohydrate kinase PfkB family. LacC subfamily.

The enzyme catalyses D-tagatofuranose 6-phosphate + ATP = D-tagatofuranose 1,6-bisphosphate + ADP + H(+). Its pathway is carbohydrate metabolism; D-tagatose 6-phosphate degradation; D-glyceraldehyde 3-phosphate and glycerone phosphate from D-tagatose 6-phosphate: step 1/2. In Streptococcus pneumoniae (strain Hungary19A-6), this protein is Tagatose-6-phosphate kinase.